The following is a 241-amino-acid chain: Tryptophan synthase alpha chain (241 aa).

Catalysis depends on proton acceptor residues Glu31 and Asp42.

The protein belongs to the TrpA family. In terms of assembly, tetramer of two alpha and two beta chains.

It catalyses the reaction (1S,2R)-1-C-(indol-3-yl)glycerol 3-phosphate + L-serine = D-glyceraldehyde 3-phosphate + L-tryptophan + H2O. The protein operates within amino-acid biosynthesis; L-tryptophan biosynthesis; L-tryptophan from chorismate: step 5/5. Functionally, the alpha subunit is responsible for the aldol cleavage of indoleglycerol phosphate to indole and glyceraldehyde 3-phosphate. In Staphylococcus saprophyticus subsp. saprophyticus (strain ATCC 15305 / DSM 20229 / NCIMB 8711 / NCTC 7292 / S-41), this protein is Tryptophan synthase alpha chain.